We begin with the raw amino-acid sequence, 501 residues long: Cryptochrome-1 (501 aa).

The 130-residue stretch at K5–C134 folds into the Photolyase/cryptochrome alpha/beta domain. Residues Y231 and T243–S247 each bind FAD. R356 lines the ATP pocket. Positions 386 and 388 each coordinate FAD. D405 is a binding site for ATP.

The protein belongs to the DNA photolyase class-1 family. As to quaternary structure, homodimer. The cofactor is FAD. (6R)-5,10-methylene-5,6,7,8-tetrahydrofolate is required as a cofactor.

Mediates blue light-induced gene expression in addition to its role in blue light-dependent inhibition of stem growth. The protein is Cryptochrome-1 (PHR1) of Sinapis alba (White mustard).